Here is a 211-residue protein sequence, read N- to C-terminus: Probable nicotinate-nucleotide adenylyltransferase (211 aa).

This sequence belongs to the NadD family.

The catalysed reaction is nicotinate beta-D-ribonucleotide + ATP + H(+) = deamido-NAD(+) + diphosphate. It participates in cofactor biosynthesis; NAD(+) biosynthesis; deamido-NAD(+) from nicotinate D-ribonucleotide: step 1/1. Functionally, catalyzes the reversible adenylation of nicotinate mononucleotide (NaMN) to nicotinic acid adenine dinucleotide (NaAD). This chain is Probable nicotinate-nucleotide adenylyltransferase, found in Desulfotalea psychrophila (strain LSv54 / DSM 12343).